A 224-amino-acid chain; its full sequence is 7-cyano-7-deazaguanine synthase (224 aa).

9 to 19 (LSGGLDSATVL) lines the ATP pocket. Cysteine 189, cysteine 199, cysteine 202, and cysteine 205 together coordinate Zn(2+).

Belongs to the QueC family. Zn(2+) is required as a cofactor.

The enzyme catalyses 7-carboxy-7-deazaguanine + NH4(+) + ATP = 7-cyano-7-deazaguanine + ADP + phosphate + H2O + H(+). It participates in purine metabolism; 7-cyano-7-deazaguanine biosynthesis. In terms of biological role, catalyzes the ATP-dependent conversion of 7-carboxy-7-deazaguanine (CDG) to 7-cyano-7-deazaguanine (preQ(0)). The polypeptide is 7-cyano-7-deazaguanine synthase (Ralstonia pickettii (strain 12J)).